The following is a 402-amino-acid chain: Bacillibactin exporter (402 aa).

11 helical membrane-spanning segments follow: residues 4-24 (IIAL…LIPV), 39-59 (VSLI…IAGY), 69-89 (ILLP…FAST), 104-124 (LQGI…GDLF), 162-182 (FVPF…VLFL), 212-232 (WLYT…GVLF), 247-267 (VAKG…SFIA), 278-298 (MKFC…ALWW), 302-322 (FYFL…ALPA), 342-362 (FYNS…AALM), and 368-388 (IIFI…LFTV).

This sequence belongs to the major facilitator superfamily.

The protein resides in the cell membrane. In terms of biological role, involved in secretion of bacillibactin. This is Bacillibactin exporter (ymfD) from Bacillus subtilis (strain 168).